The sequence spans 333 residues: Adenosine deaminase (333 aa).

His12 and His14 together coordinate Zn(2+). Substrate is bound by residues His14, Asp16, and Gly170. His197 contributes to the Zn(2+) binding site. The active-site Proton donor is Glu200. Asp278 contributes to the Zn(2+) binding site. Asp279 lines the substrate pocket.

The protein belongs to the metallo-dependent hydrolases superfamily. Adenosine and AMP deaminases family. Adenosine deaminase subfamily. Zn(2+) is required as a cofactor.

It catalyses the reaction adenosine + H2O + H(+) = inosine + NH4(+). The enzyme catalyses 2'-deoxyadenosine + H2O + H(+) = 2'-deoxyinosine + NH4(+). Its function is as follows. Catalyzes the hydrolytic deamination of adenosine and 2-deoxyadenosine. This chain is Adenosine deaminase, found in Escherichia coli O45:K1 (strain S88 / ExPEC).